Consider the following 477-residue polypeptide: UDP-glycosyltransferase 71K1 (477 aa).

Residues serine 285, 350 to 351 (WA), 368 to 376 (HCGWNSILE), and 390 to 393 (YAEQ) each bind UDP-alpha-D-glucose.

Belongs to the UDP-glycosyltransferase family.

Its function is as follows. Glycosyltransferase that possesses chalcone and flavonol 2'-O-glycosyltransferase activity. Converts phloretin to phlorizin (phloretin 2'-O-glucoside), a potent antioxidant. Possesses glycosyltransferase activity toward quercetin, isoliquiritigenin, butein and caffeic acid. The protein is UDP-glycosyltransferase 71K1 of Malus domestica (Apple).